The primary structure comprises 437 residues: UDP-glucuronate 4-epimerase 4 (437 aa).

A helical membrane pass occupies residues 30-50; that stretch reads SLTKFAFFSFFLLCLISLLFL. Residues 56-76 form a disordered region; the sequence is INPSSPSDPSRRSLRTNTYGG. The chain crosses the membrane as a helical span at residues 96 to 116; that stretch reads GITVLVTGAAGFVGTHVSAAL. 98 to 129 lines the NAD(+) pocket; that stretch reads TVLVTGAAGFVGTHVSAALKRRGDGVIGLDNF. Catalysis depends on Tyr-248, which acts as the Proton acceptor.

The protein belongs to the NAD(P)-dependent epimerase/dehydratase family. As to quaternary structure, homodimer. In terms of tissue distribution, in roots, leaves, siliques, flowers, pollen and stems.

The protein resides in the golgi apparatus. Its subcellular location is the golgi stack membrane. It catalyses the reaction UDP-alpha-D-glucuronate = UDP-alpha-D-galacturonate. Its activity is regulated as follows. Activated by glycerol, not effected by dimethyl sulfoxide and inhibited by high concentration of monovalent salts, UDP-xylose, UDP-arabinose or UDP. Functionally, involved in the synthesis of the negatively charged monosaccharide that forms the backbone of pectic cell wall components. The chain is UDP-glucuronate 4-epimerase 4 (GAE4) from Arabidopsis thaliana (Mouse-ear cress).